The chain runs to 483 residues: Regulatory protein ViaA (483 aa).

Belongs to the ViaA family. As to quaternary structure, homodimer. Interacts with RavA.

It is found in the cytoplasm. Its function is as follows. Component of the RavA-ViaA chaperone complex, which may act on the membrane to optimize the function of some of the respiratory chains. ViaA stimulates the ATPase activity of RavA. The chain is Regulatory protein ViaA from Enterobacter sp. (strain 638).